The following is a 232-amino-acid chain: Flagellar L-ring protein (232 aa).

The N-terminal stretch at methionine 1–glycine 21 is a signal peptide. Cysteine 22 carries the N-palmitoyl cysteine lipid modification. Residue cysteine 22 is the site of S-diacylglycerol cysteine attachment.

The protein belongs to the FlgH family. In terms of assembly, the basal body constitutes a major portion of the flagellar organelle and consists of four rings (L,P,S, and M) mounted on a central rod.

It localises to the cell outer membrane. It is found in the bacterial flagellum basal body. Assembles around the rod to form the L-ring and probably protects the motor/basal body from shearing forces during rotation. The chain is Flagellar L-ring protein from Escherichia coli O6:H1 (strain CFT073 / ATCC 700928 / UPEC).